Reading from the N-terminus, the 486-residue chain is Arginine/agmatine antiporter (486 aa).

Transmembrane regions (helical) follow at residues 12-32, 41-61, 85-105, 129-149, 160-180, 211-231, 242-262, 296-316, 341-361, 367-387, 418-438, and 461-481; these read LGAI…GIFS, AGAG…FFIA, GFGP…QIFG, NTIP…FIVL, IIGT…TAFA, STML…VMSA, ATLL…ILPF, VGLL…VAEI, LSLY…YFST, MLSI…AFLF, LWLI…LLAL, and EVTK…LFST.

The protein belongs to the amino acid-polyamine-organocation (APC) superfamily. Basic amino acid/polyamine antiporter (APA) (TC 2.A.3.2) family.

The protein resides in the cell inner membrane. In terms of biological role, catalyzes the exchange of L-arginine for agmatine. The arginine uptake by the bacterium in the macrophage may be a virulence factor against the host innate immune response. The polypeptide is Arginine/agmatine antiporter (aaxC) (Chlamydia caviae (strain ATCC VR-813 / DSM 19441 / 03DC25 / GPIC) (Chlamydophila caviae)).